Reading from the N-terminus, the 300-residue chain is MQTDLSDSSFFNHKSVMTDEIMASLEHYPLIHNNQLKGIDATLGGGGHSYHLLRKYSDLNIIGLDQDPFARKSALKKLDEFKSRIDIRASNFADFVPKEKVSFVIADLGVNSNQLDDPKRGFSFQKDGPLDMRMNPLLDVDAEKLIEVLNEKDLANLIYKYGDERLSRKIARKIKLDLKENGKYSGTKELAYSIAGCFPPKQRYKKIHPATRTFQALRIAVNKEIEVLEKFLQVVPEWLLPGGIISVISFHSLEDRLVKSCFKNDQRLKNLTKKPITPSEEEVELNKRARSGKLRIAQLN.

Residues G46–H48, D65, F92, D107, and Q114 each bind S-adenosyl-L-methionine.

Belongs to the methyltransferase superfamily. RsmH family.

The protein resides in the cytoplasm. The enzyme catalyses cytidine(1402) in 16S rRNA + S-adenosyl-L-methionine = N(4)-methylcytidine(1402) in 16S rRNA + S-adenosyl-L-homocysteine + H(+). Functionally, specifically methylates the N4 position of cytidine in position 1402 (C1402) of 16S rRNA. In Prochlorococcus marinus (strain MIT 9301), this protein is Ribosomal RNA small subunit methyltransferase H.